Here is a 356-residue protein sequence, read N- to C-terminus: Protein RecA (356 aa).

ATP is bound at residue 68–75; sequence GPESSGKT.

Belongs to the RecA family.

The protein localises to the cytoplasm. Can catalyze the hydrolysis of ATP in the presence of single-stranded DNA, the ATP-dependent uptake of single-stranded DNA by duplex DNA, and the ATP-dependent hybridization of homologous single-stranded DNAs. It interacts with LexA causing its activation and leading to its autocatalytic cleavage. In Clostridium botulinum (strain Eklund 17B / Type B), this protein is Protein RecA.